We begin with the raw amino-acid sequence, 447 residues long: SPARC-related modular calcium-binding protein 2 (447 aa).

The first 21 residues, 1-21 (MLPPQLCWLPLLAALLPPVPA), serve as a signal peptide directing secretion. The Kazal-like domain maps to 34–86 (QDKDRDCSLDCPSSPQKPLCASDGRTFLSRCEFQRAKCKDPQLEIAHRGNCKD). Disulfide bonds link Cys-40-Cys-71, Cys-44-Cys-64, Cys-53-Cys-84, Cys-90-Cys-113, Cys-124-Cys-131, and Cys-133-Cys-153. The Thyroglobulin type-1 1 domain maps to 87–153 (VSRCVAERKY…TAVAHKTPRC (67 aa)). Residues 147-230 (AHKTPRCPGS…QSALEEAKQP (84 aa)) are disordered. Residues 161–172 (VPQREGAGKADD) show a composition bias toward basic and acidic residues. N-linked (GlcNAc...) asparagine glycosylation is present at Asn-206. Residues 206 to 216 (NKTNKNSASSC) show a composition bias toward polar residues. Residues 213-281 (ASSCDQEHQS…TSTRYEQPKC (69 aa)) enclose the Thyroglobulin type-1 2 domain. Cystine bridges form between Cys-216-Cys-240, Cys-251-Cys-258, and Cys-260-Cys-281. Positions 217 to 230 (DQEHQSALEEAKQP) are enriched in basic and acidic residues. 2 EF-hand domains span residues 347 to 382 (LEER…LRKK) and 384 to 419 (KPKK…TREE). Positions 360, 362, 364, 366, 371, 397, 399, 401, 403, and 408 each coordinate Ca(2+). A glycan (N-linked (GlcNAc...) asparagine) is linked at Asn-362. Residues 416–447 (TREEGKANTRKRHTPRGNAESSSSNRQPRKQG) form a disordered region.

As to quaternary structure, binds various proteins from the extracellular matrix. Post-translationally, N-glycosylated. In terms of tissue distribution, strongly expressed in ovary, followed by heart, muscle, spleen, brain, thymus, lung, liver, kidney, spleen, testis, ovary and skeletal muscle.

The protein resides in the secreted. It is found in the extracellular space. It localises to the extracellular matrix. Its subcellular location is the basement membrane. In terms of biological role, can stimulate endothelial cell proliferation, migration, as well as angiogenesis. Promotes matrix assembly and cell adhesiveness. In Mus musculus (Mouse), this protein is SPARC-related modular calcium-binding protein 2 (Smoc2).